The primary structure comprises 116 residues: Ribosome-binding factor A (116 aa).

Belongs to the RbfA family. As to quaternary structure, monomer. Binds 30S ribosomal subunits, but not 50S ribosomal subunits or 70S ribosomes.

It is found in the cytoplasm. Its function is as follows. One of several proteins that assist in the late maturation steps of the functional core of the 30S ribosomal subunit. Associates with free 30S ribosomal subunits (but not with 30S subunits that are part of 70S ribosomes or polysomes). Required for efficient processing of 16S rRNA. May interact with the 5'-terminal helix region of 16S rRNA. This chain is Ribosome-binding factor A, found in Clostridium botulinum (strain Alaska E43 / Type E3).